Consider the following 334-residue polypeptide: Thioredoxin reductase aclT (334 aa).

Residues 16 to 19, 38 to 43, isoleucine 93, alanine 122, aspartate 294, and 302 to 303 contribute to the FAD site; these read GGPA, NASIDR, and TL.

Belongs to the class-II pyridine nucleotide-disulfide oxidoreductase family. As to quaternary structure, homodimer. It depends on FAD as a cofactor.

It functions in the pathway mycotoxin biosynthesis. Thioredoxin reductase; part of the gene cluster that mediates the biosynthesis of aspirochlorine (or antibiotic A30641), an unusual halogenated spiro compound with distinctive antifungal properties due to selective inhibition of protein biosynthesis, and which is also active against bacteria, viruses, and murine tumor cells. The non-ribosomal peptide synthetase (NRPS) aclP is responsible the formation of the diketopiperazine (DKP) core from the condensation of 2 phenylalanine residues. One Phe residue is tailored into chlorotyrosine by hydroxylation and chlorination, whereas the second Phe undergoes an unprecedented C-C bond cleavage to be converted into glycine. After formation of the DKP, sulfur is incorporated into the DKP by conjugation with glutathione by aclG, followed by its stepwise degradation to the thiol by aclI, aclJ and aclK, and the dithiol oxidation by aclT. In addition, oxygenases (aclB, aclC, aclL and aclO) and O-methyltransferases (aclM and aclU) act as tailoring enzymes to produce the intermediate dechloroaspirochlorine. Ultimately, chlorination of dechloroaspirochlorine by the halogenase aclH is the last step in the aspirochlorine pathway. In Aspergillus oryzae (strain ATCC 42149 / RIB 40) (Yellow koji mold), this protein is Thioredoxin reductase aclT.